A 353-amino-acid polypeptide reads, in one-letter code: Photosystem II protein D1 (353 aa).

Thr-2 carries the post-translational modification N-acetylthreonine. At Thr-2 the chain carries Phosphothreonine. The next 3 membrane-spanning stretches (helical) occupy residues 29-46 (YIGW…TATS), 118-133 (HFLL…EWEL), and 142-156 (WIAV…AATA). His-118 is a binding site for chlorophyll a. Tyr-126 contributes to the pheophytin a binding site. [CaMn4O5] cluster-binding residues include Asp-170 and Glu-189. The helical transmembrane segment at 197–218 (FHMLGVAGVFGSSLFSAMHGSL) threads the bilayer. His-198 is a binding site for chlorophyll a. A quinone contacts are provided by residues His-215 and 264-265 (SF). His-215 serves as a coordination point for Fe cation. His-272 is a Fe cation binding site. Residues 274 to 288 (FLAAWPVVGIWFTAL) form a helical membrane-spanning segment. Positions 332, 333, 342, and 344 each coordinate [CaMn4O5] cluster. Residues 345-353 (AMEAPSVNG) constitute a propeptide that is removed on maturation.

The protein belongs to the reaction center PufL/M/PsbA/D family. In terms of assembly, PSII is composed of 1 copy each of membrane proteins PsbA, PsbB, PsbC, PsbD, PsbE, PsbF, PsbH, PsbI, PsbJ, PsbK, PsbL, PsbM, PsbT, PsbX, PsbY, PsbZ, Psb30/Ycf12, at least 3 peripheral proteins of the oxygen-evolving complex and a large number of cofactors. It forms dimeric complexes. The cofactor is The D1/D2 heterodimer binds P680, chlorophylls that are the primary electron donor of PSII, and subsequent electron acceptors. It shares a non-heme iron and each subunit binds pheophytin, quinone, additional chlorophylls, carotenoids and lipids. D1 provides most of the ligands for the Mn4-Ca-O5 cluster of the oxygen-evolving complex (OEC). There is also a Cl(-1) ion associated with D1 and D2, which is required for oxygen evolution. The PSII complex binds additional chlorophylls, carotenoids and specific lipids.. Tyr-161 forms a radical intermediate that is referred to as redox-active TyrZ, YZ or Y-Z. Post-translationally, C-terminally processed by CTPA; processing is essential to allow assembly of the oxygen-evolving complex and thus photosynthetic growth.

It localises to the plastid. Its subcellular location is the chloroplast thylakoid membrane. The enzyme catalyses 2 a plastoquinone + 4 hnu + 2 H2O = 2 a plastoquinol + O2. In terms of biological role, photosystem II (PSII) is a light-driven water:plastoquinone oxidoreductase that uses light energy to abstract electrons from H(2)O, generating O(2) and a proton gradient subsequently used for ATP formation. It consists of a core antenna complex that captures photons, and an electron transfer chain that converts photonic excitation into a charge separation. The D1/D2 (PsbA/PsbD) reaction center heterodimer binds P680, the primary electron donor of PSII as well as several subsequent electron acceptors. The chain is Photosystem II protein D1 from Vigna unguiculata (Cowpea).